Consider the following 324-residue polypeptide: Ribosomal RNA small subunit methyltransferase H (324 aa).

S-adenosyl-L-methionine contacts are provided by residues 35-37 (GGH), Asp55, Phe85, Asp103, and Gln110.

The protein belongs to the methyltransferase superfamily. RsmH family.

It is found in the cytoplasm. The catalysed reaction is cytidine(1402) in 16S rRNA + S-adenosyl-L-methionine = N(4)-methylcytidine(1402) in 16S rRNA + S-adenosyl-L-homocysteine + H(+). Functionally, specifically methylates the N4 position of cytidine in position 1402 (C1402) of 16S rRNA. The polypeptide is Ribosomal RNA small subunit methyltransferase H (Solidesulfovibrio magneticus (strain ATCC 700980 / DSM 13731 / RS-1) (Desulfovibrio magneticus)).